A 243-amino-acid chain; its full sequence is Small ribosomal subunit protein uS3 (243 aa).

A KH type-2 domain is found at 39-107 (MRKFVMSELK…ETHLNIVEVR (69 aa)). Residues 214–243 (ASERRAMEGDAQGPASRDRDRDRDRRRDNA) are disordered. Residues 229–243 (SRDRDRDRDRRRDNA) show a composition bias toward basic and acidic residues.

It belongs to the universal ribosomal protein uS3 family. Part of the 30S ribosomal subunit. Forms a tight complex with proteins S10 and S14.

Functionally, binds the lower part of the 30S subunit head. Binds mRNA in the 70S ribosome, positioning it for translation. The sequence is that of Small ribosomal subunit protein uS3 from Rhizobium johnstonii (strain DSM 114642 / LMG 32736 / 3841) (Rhizobium leguminosarum bv. viciae).